Reading from the N-terminus, the 1183-residue chain is DNA-directed RNA polymerase subunit beta (1183 aa).

The segment covering 1153-1162 (DMQDNEEEDV) has biased composition (acidic residues). The tract at residues 1153–1183 (DMQDNEEEDVVERKVDLQQKDAPQSQKEVTD) is disordered. Polar residues predominate over residues 1173 to 1183 (DAPQSQKEVTD).

This sequence belongs to the RNA polymerase beta chain family. The RNAP catalytic core consists of 2 alpha, 1 beta, 1 beta' and 1 omega subunit. When a sigma factor is associated with the core the holoenzyme is formed, which can initiate transcription.

It catalyses the reaction RNA(n) + a ribonucleoside 5'-triphosphate = RNA(n+1) + diphosphate. Its function is as follows. DNA-dependent RNA polymerase catalyzes the transcription of DNA into RNA using the four ribonucleoside triphosphates as substrates. The polypeptide is DNA-directed RNA polymerase subunit beta (Staphylococcus saprophyticus subsp. saprophyticus (strain ATCC 15305 / DSM 20229 / NCIMB 8711 / NCTC 7292 / S-41)).